A 156-amino-acid polypeptide reads, in one-letter code: ATP synthase subunit b', chloroplastic (156 aa).

The helical transmembrane segment at 24–44 threads the bilayer; that stretch reads ATLPLVAIQFILLMVTLNIIL.

Belongs to the ATPase B chain family. As to quaternary structure, F-type ATPases have 2 components, F(1) - the catalytic core - and F(0) - the membrane proton channel. F(1) has five subunits: alpha(3), beta(3), gamma(1), delta(1), epsilon(1). F(0) has four main subunits: a(1), b(1), b'(1) and c(10-14). The alpha and beta chains form an alternating ring which encloses part of the gamma chain. F(1) is attached to F(0) by a central stalk formed by the gamma and epsilon chains, while a peripheral stalk is formed by the delta, b and b' chains.

The protein localises to the plastid. It localises to the chloroplast thylakoid membrane. In terms of biological role, f(1)F(0) ATP synthase produces ATP from ADP in the presence of a proton or sodium gradient. F-type ATPases consist of two structural domains, F(1) containing the extramembraneous catalytic core and F(0) containing the membrane proton channel, linked together by a central stalk and a peripheral stalk. During catalysis, ATP synthesis in the catalytic domain of F(1) is coupled via a rotary mechanism of the central stalk subunits to proton translocation. Its function is as follows. Component of the F(0) channel, it forms part of the peripheral stalk, linking F(1) to F(0). The b'-subunit is a diverged and duplicated form of b found in plants and photosynthetic bacteria. In Thalassiosira pseudonana (Marine diatom), this protein is ATP synthase subunit b', chloroplastic.